The following is a 473-amino-acid chain: Uronate isomerase (473 aa).

It belongs to the metallo-dependent hydrolases superfamily. Uronate isomerase family.

It carries out the reaction D-glucuronate = D-fructuronate. It catalyses the reaction aldehydo-D-galacturonate = keto-D-tagaturonate. It functions in the pathway carbohydrate metabolism; pentose and glucuronate interconversion. This chain is Uronate isomerase (uxaC), found in Geobacillus stearothermophilus (Bacillus stearothermophilus).